Here is a 790-residue protein sequence, read N- to C-terminus: MSRRRHSYENDGGQPHKRRKTSDANETEDHLESLICKVGEKSACSLESNLEGLAGVLEADLPNYKSKILRLLCTVARLLPEKLTIYTTLVGLLNARNYNFGGEFVEAMIRQLKESLKANNYNEAVYLVRFLSDLVNCHVIAAPSMVAMFENFVSVTQEEDVPQVRRDWYVYAFLSSLPWVGKELYEKKDAEMDRIFSSTESYLKRRQKTHVPMLQVWTADKPHPQEEYLDCLWAQIQKLKKDRWQERHILRPYLAFDSILCEALQHNLPPFTPPPHTEDSVYPMPRVIFRMFDYTDDPEGPVMPGSHSVERFVIEENLHCIIKSYWKERKTCAAQLVSYPGKNKIPLNYHIVEVIFAELFQLPAPPHIDVMYTTLLIELCKLQPGSLPQVLAQATEMLYMRLDTMSTTCVDRFINWFSHHLSNFQFRWSWEDWSDCLTQDLESPKPKFVREVLEKCMRLSYHQHILDIVPPTFSALCPANPTCIYKYGDESSNSLPGHSVALCLSVAFKSKATNDEIFSILKDVPNPNQVDDDDEGFRFNPLKIEVFVQTLLHLAAKSFSHSFSALAKFHEVFKTLAESDKGKLHVLRVMFEVWRNHPQMIAVLVDKMIRTQIVDCAAVANWIFSSELSRDFTRLFVWEILHSTIRKMNKHVLKIQKELEEAKEKLARQHKRRSDDDDRGSDRKDGALEEQIERLQEKVESAQSEQKNLFLVIFQRFIMILTEHLVRCETDGTSILTPWYKNCIERLQQIFLQHHQIIQQYMVTLENLLFTAELDPHILAVFQQFCALQA.

Residues 1–26 (MSRRRHSYENDGGQPHKRRKTSDANE) form a disordered region. Residues 3–20 (RRRHSYENDGGQPHKRRK) carry the Nuclear localization signal motif. Serine 7 is modified (phosphoserine). Threonine 21 bears the Phosphothreonine mark. Phosphoserine occurs at positions 22 and 201. One can recognise an MIF4G domain in the interval 28 to 240 (EDHLESLICK…CLWAQIQKLK (213 aa)). Lysine 204 carries the N6-acetyllysine modification. Residues 643–713 (STIRKMNKHV…SEQKNLFLVI (71 aa)) adopt a coiled-coil conformation. A Glycyl lysine isopeptide (Lys-Gly) (interchain with G-Cter in SUMO2) cross-link involves residue lysine 684. Lysine 698 is modified (N6-acetyllysine).

It belongs to the NCBP1 family. As to quaternary structure, component of the nuclear cap-binding complex (CBC), a heterodimer composed of NCBP1/CBP80 and NCBP2/CBP20 that interacts with m7GpppG-capped RNA. Found in a U snRNA export complex containing PHAX/RNUXA, NCBP1/CBP80, NCBP2/CBP20, RAN, XPO1 and m7G-capped RNA. Identified in a IGF2BP1-dependent mRNP granule complex containing untranslated mRNAs. Interacts with PHAX/RNUXA, SRRT/ARS2, EIF4G2, IGF2BP1, HNRNPF, HNRNPH1, KIAA0427/CTIF, PARN, DROSHA, UPF1 and ALYREF/THOC4. May interact with EIF4G1; the interaction is however controversial since it is reported by, and, but is not observed by. The large PER complex involved in the repression of transcriptional termination is composed of at least PER2, CDK9, DDX5, DHX9, NCBP1/CBP80 and POLR2A. Component of an alternative nuclear cap-binding complex (CBC) composed of NCBP1/CBP80 and NCBP3. Interacts with METTL3. Interacts with ZFC3H1 in a RNase-insensitive manner. Interacts with MTREX. Interacts with TASOR. Interacts with DHX34; the interaction is RNA-dependent. Interacts with KPNA3. In terms of processing, dephosphorylated at Thr-21 by the PNUTS-PP1 complex during RNA polymerase II transcription pause-release.

Its subcellular location is the nucleus. It localises to the cytoplasm. In terms of biological role, component of the cap-binding complex (CBC), which binds cotranscriptionally to the 5'-cap of pre-mRNAs and is involved in various processes such as pre-mRNA splicing, translation regulation, nonsense-mediated mRNA decay, RNA-mediated gene silencing (RNAi) by microRNAs (miRNAs) and mRNA export. The CBC complex is involved in mRNA export from the nucleus via its interaction with ALYREF/THOC4/ALY, leading to the recruitment of the mRNA export machinery to the 5'-end of mRNA and to mRNA export in a 5' to 3' direction through the nuclear pore. The CBC complex is also involved in mediating U snRNA and intronless mRNAs export from the nucleus. The CBC complex is essential for a pioneer round of mRNA translation, before steady state translation when the CBC complex is replaced by cytoplasmic cap-binding protein eIF4E. The pioneer round of mRNA translation mediated by the CBC complex plays a central role in nonsense-mediated mRNA decay (NMD), NMD only taking place in mRNAs bound to the CBC complex, but not on eIF4E-bound mRNAs. The CBC complex enhances NMD in mRNAs containing at least one exon-junction complex (EJC) via its interaction with UPF1, promoting the interaction between UPF1 and UPF2. The CBC complex is also involved in 'failsafe' NMD, which is independent of the EJC complex, while it does not participate in Staufen-mediated mRNA decay (SMD). During cell proliferation, the CBC complex is also involved in microRNAs (miRNAs) biogenesis via its interaction with SRRT/ARS2 and is required for miRNA-mediated RNA interference. The CBC complex also acts as a negative regulator of PARN, thereby acting as an inhibitor of mRNA deadenylation. In the CBC complex, NCBP1/CBP80 does not bind directly capped RNAs (m7GpppG-capped RNA) but is required to stabilize the movement of the N-terminal loop of NCBP2/CBP20 and lock the CBC into a high affinity cap-binding state with the cap structure. Associates with NCBP3 to form an alternative cap-binding complex (CBC) which plays a key role in mRNA export and is particularly important in cellular stress situations such as virus infections. The conventional CBC with NCBP2 binds both small nuclear RNA (snRNA) and messenger (mRNA) and is involved in their export from the nucleus whereas the alternative CBC with NCBP3 does not bind snRNA and associates only with mRNA thereby playing a role only in mRNA export. NCBP1/CBP80 is required for cell growth and viability. This chain is Nuclear cap-binding protein subunit 1 (Ncbp1), found in Rattus norvegicus (Rat).